An 86-amino-acid chain; its full sequence is Acyl-CoA-binding protein homolog (86 aa).

The region spanning Val2–Ala86 is the ACB domain. Residues Lys14, Tyr29–Lys33, Lys51, Lys55, and Tyr74 contribute to the an acyl-CoA site.

The protein belongs to the ACBP family. In terms of tissue distribution, expressed in larval and pupal brains. In adults, expressed in cardia, part of the Malpighian tubules, fat body, and gametes of both sexes.

Binds medium- and long-chain acyl-CoA esters with very high affinity and may function as an intracellular carrier of acyl-CoA esters. May be involved in energy metabolism in a manner that depends on the substrate used for energy production. Dbi and its metabolites are involved in the regulation of multiple biological processes. The polypeptide is Acyl-CoA-binding protein homolog (Drosophila melanogaster (Fruit fly)).